A 767-amino-acid polypeptide reads, in one-letter code: 5-methyltetrahydropteroyltriglutamate--homocysteine methyltransferase (767 aa).

Residues 17-20 and lysine 117 each bind 5-methyltetrahydropteroyltri-L-glutamate; that span reads RELK. Residues 441 to 443 and glutamate 494 contribute to the L-homocysteine site; that span reads IGS. Residues 441–443 and glutamate 494 contribute to the L-methionine site; that span reads IGS. Residues 525 to 526 and tryptophan 571 contribute to the 5-methyltetrahydropteroyltri-L-glutamate site; that span reads RC. Aspartate 609 is an L-homocysteine binding site. Aspartate 609 lines the L-methionine pocket. Residue glutamate 615 coordinates 5-methyltetrahydropteroyltri-L-glutamate. Zn(2+)-binding residues include histidine 652, cysteine 654, and glutamate 676. Histidine 705 acts as the Proton donor in catalysis. Cysteine 737 provides a ligand contact to Zn(2+).

It belongs to the vitamin-B12 independent methionine synthase family. Zn(2+) serves as cofactor.

The catalysed reaction is 5-methyltetrahydropteroyltri-L-glutamate + L-homocysteine = tetrahydropteroyltri-L-glutamate + L-methionine. It functions in the pathway amino-acid biosynthesis; L-methionine biosynthesis via de novo pathway; L-methionine from L-homocysteine (MetE route): step 1/1. Its function is as follows. Catalyzes the transfer of a methyl group from 5-methyltetrahydrofolate to homocysteine resulting in methionine formation. This Bifidobacterium longum (strain NCC 2705) protein is 5-methyltetrahydropteroyltriglutamate--homocysteine methyltransferase.